An 89-amino-acid chain; its full sequence is LSM complex subunit LSM3 (89 aa).

Residues 3-82 enclose the Sm domain; that stretch reads TPLDLLKLNL…VTLISTPSED (80 aa).

This sequence belongs to the snRNP Sm proteins family. In terms of assembly, component of the heptameric LSM1-LSM7 complex that forms a seven-membered ring structure with a donut shape. The LSm subunits are arranged in the order LSM1, LSM2, LSM3, LSM6, LSM5, LSM7 and LSM4. Except for LSM1, where a C-terminal helix crosses the ring structure to form additional interactions with LSM3 and LSM6, each subunit interacts only with its two neighboring subunits. The LSM1-LSM7 complex interacts with PAT1; within the complex PAT1 has direct interactions with LSM2 and LSM3. The LSM1-LSM7 complex interacts with XRN1. Component of the heptameric LSM2-LSM8 complex that forms a seven-membered ring structure with a donut shape; an RNA strand can pass through the hole in the center of the ring structure. The LSm subunits are arranged in the order LSM8, LSM2, LSM3, LSM6, LSM5, LSM7 and LSM4. Component of the spliceosome U4/U6-U5 tri-snRNP complex composed of the U4, U6 and U5 snRNAs and at least PRP3, PRP4, PRP6, PRP8, PRP18, PRP31, PRP38, SNU13, SNU23, SNU66, SNU114, SPP381, SMB1, SMD1, SMD2, SMD3, SMX2, SMX3, LSM2, LSM3, LSM4, LSM5, LSM6, LSM7, LSM8, BRR2 and DIB1. May be found in a complex comprising LSM2-LSM7 without LSM1 or LSM8; the complex associates with pre-P RNA and snoRNA SNR5.

It is found in the nucleus. The protein localises to the nucleolus. The protein resides in the cytoplasm. Functionally, component of LSm protein complexes, which are involved in RNA processing and may function in a chaperone-like manner. Component of the cytoplasmic LSM1-LSM7 complex which is involved in mRNA degradation by activating the decapping step. Together with PAT1, the LSM1-LSM7 complex binds to osmotic stress-activated mRNAs to attenuate the osmotic stress response, probably by limiting ribosome access to the mRNA and consequently translation. Component of the nuclear LSM2-LSM8 complex, which is involved in spliceosome assembly. The LSM2-LSM8 complex plays a role in the biogenesis of the spliceosomal U4/U6-U5 tri-snRNP complex by accelerating PRP24-mediated annealing of U4/U6 di-snRNA. The LSM2-LSM8 complex binds U6 snRNA terminating with a non-cyclic 3' phosphate group. LSM2-LSM8 is probably also involved in degradation of nuclear pre-mRNA by targeting them for decapping. LSM2-LSM8 could be involved in processing of pre-tRNAs, pre-rRNAs and U3 snoRNA, although involvement may be indirect. In a complex that probably contains LSM2-LSM7, but not LSM1 or LSM8, associates with the precursor of the RNA component of RNase P (pre-P RNA) and may be involved in maturing pre-P RNA; the complex also associates with snoRNA SNR5. The polypeptide is LSM complex subunit LSM3 (LSM3) (Saccharomyces cerevisiae (strain ATCC 204508 / S288c) (Baker's yeast)).